A 369-amino-acid chain; its full sequence is 3-dehydroquinate synthase (369 aa).

Residues 75 to 80 (DGEEHK), 109 to 113 (GVIGD), 133 to 134 (TT), Lys146, Lys155, and 173 to 176 (TLKT) each bind NAD(+). Residues Glu188, His251, and His268 each contribute to the Zn(2+) site.

It belongs to the sugar phosphate cyclases superfamily. Dehydroquinate synthase family. The cofactor is Co(2+). Zn(2+) serves as cofactor. It depends on NAD(+) as a cofactor.

It localises to the cytoplasm. It catalyses the reaction 7-phospho-2-dehydro-3-deoxy-D-arabino-heptonate = 3-dehydroquinate + phosphate. Its pathway is metabolic intermediate biosynthesis; chorismate biosynthesis; chorismate from D-erythrose 4-phosphate and phosphoenolpyruvate: step 2/7. In terms of biological role, catalyzes the conversion of 3-deoxy-D-arabino-heptulosonate 7-phosphate (DAHP) to dehydroquinate (DHQ). The sequence is that of 3-dehydroquinate synthase from Legionella pneumophila (strain Corby).